The following is a 583-amino-acid chain: Phosphoglucomutase, cytoplasmic 2 (583 aa).

The alpha-D-glucose 1,6-bisphosphate site is built by R25 and S124. S124 (phosphoserine intermediate) is an active-site residue. S124, D300, D302, and D304 together coordinate Mg(2+). Position 124 is a phosphoserine (S124). Alpha-D-glucose 1,6-bisphosphate contacts are provided by D304, R305, T368, E387, S389, and K400.

It belongs to the phosphohexose mutase family. Monomer. Requires Mg(2+) as cofactor.

The protein localises to the cytoplasm. The catalysed reaction is alpha-D-glucose 1-phosphate = alpha-D-glucose 6-phosphate. The enzyme catalyses O-phospho-L-seryl-[protein] + alpha-D-glucose 1-phosphate = alpha-D-glucose 1,6-bisphosphate + L-seryl-[protein]. It catalyses the reaction alpha-D-glucose 1,6-bisphosphate + L-seryl-[protein] = O-phospho-L-seryl-[protein] + alpha-D-glucose 6-phosphate. Its function is as follows. Catalyzes the reversible isomerization of alpha-D-glucose 1-phosphate to alpha-D-glucose 6-phosphate. The mechanism proceeds via the intermediate compound alpha-D-glucose 1,6-bisphosphate. This enzyme participates in both the breakdown and synthesis of glucose. In Zea mays (Maize), this protein is Phosphoglucomutase, cytoplasmic 2.